The following is a 314-amino-acid chain: tRNA dimethylallyltransferase 2 (314 aa).

Position 8–15 (8–15 (GPTGTGKS)) interacts with ATP. 10–15 (TGTGKS) is a binding site for substrate.

This sequence belongs to the IPP transferase family. Monomer. Mg(2+) serves as cofactor.

It catalyses the reaction adenosine(37) in tRNA + dimethylallyl diphosphate = N(6)-dimethylallyladenosine(37) in tRNA + diphosphate. Its function is as follows. Catalyzes the transfer of a dimethylallyl group onto the adenine at position 37 in tRNAs that read codons beginning with uridine, leading to the formation of N6-(dimethylallyl)adenosine (i(6)A). The polypeptide is tRNA dimethylallyltransferase 2 (Mycobacterium ulcerans (strain Agy99)).